A 156-amino-acid chain; its full sequence is Snaclec A12 (156 aa).

Residues 1–23 (MGRSISVSFGLLVVFLSLSGTGA) form the signal peptide. 3 disulfides stabilise this stretch: Cys27–Cys38, Cys55–Cys148, and Cys123–Cys140. Residues 34–149 (YEGHCYKVFN…CELAYHFICM (116 aa)) form the C-type lectin domain.

Belongs to the snaclec family. As to quaternary structure, heterodimer; disulfide-linked. As to expression, expressed by the venom gland.

The protein localises to the secreted. Interferes with one step of hemostasis (modulation of platelet aggregation, or coagulation cascade, for example). In Macrovipera lebetinus (Levantine viper), this protein is Snaclec A12.